The primary structure comprises 555 residues: Disabled homolog 1 (555 aa).

A disordered region spans residues 1–26 (MSTETELQVAVKTSAKKDSRKKGQDR). Over residues 15 to 26 (AKKDSRKKGQDR) the composition is skewed to basic and acidic residues. In terms of domain architecture, PID spans 36 to 189 (KGEGVRYKAK…CEQAVYQTIL (154 aa)). Residues Y198, Y220, and Y232 each carry the phosphotyrosine modification. Disordered regions lie at residues 386-409 (PLATVPGTNDSARSSPQSDKPRQK) and 469-555 (LTPV…QDGS). Over residues 391 to 403 (PGTNDSARSSPQS) the composition is skewed to polar residues. Low complexity-rich tracts occupy residues 470-479 (TPVTSTTPST) and 490-501 (SSPSKSSASHVS). Position 491 is a phosphoserine; by CDK5 (S491). Residues 504-513 (TADDIFEEGF) show a composition bias toward acidic residues.

As to quaternary structure, associates with the SH2 domains of SRC, FYN and ABL. Interacts (phosphorylated on tyrosine residues) with CRK and CRKL (via respective SH2 domain). Interacts with SIAH1, LRP8 and VLDLR. Interacts with LRP1. Interacts with APLP1 (via NPXY motif). Interacts with DAB2IP. Interacts with ZSWIM8. In terms of processing, phosphorylated by FYN on Tyr-198 and Tyr-220 upon reelin induction in embryonic neurons. Also phosphorylated on Ser-491 independently of reelin signaling. Post-translationally, ubiquitinated by various cullin-5-RING E3 ubiquitin-protein ligase complexes (ECS complexes) following ligand-binding and phosphorylation, leading to its degradation. Ubiquitinated by the ECS(SOCS7) complex in the cortical plate of the developing cerebral cortex following ligand-binding and phosphorylation by FYN, leading to its degradation by the proteasome. Recognized by ZSWIM8 through a disorder targets misorder mechanism that eliminates misfolded DAB1 via ubiquitination and proteasomal degradation.

It is found in the cytoplasm. Signaling adapter of the reelin-mediated signaling pathway, which regulates the migration and differentiation of postmitotic neurons during brain development. Mediates intracellular transduction of Reelin signaling following reelin (RELN)-binding to its receptor: acts by docking proteins through its phosphotyrosine residues and PID domain. In Rattus norvegicus (Rat), this protein is Disabled homolog 1 (Dab1).